The primary structure comprises 350 residues: Glyceraldehyde-3-phosphate dehydrogenase (350 aa).

NAD(+)-binding positions include 13-14 and glycine 118; that span reads TI. Residue 147 to 149 participates in D-glyceraldehyde 3-phosphate binding; that stretch reads SCN. Cysteine 148 (nucleophile) is an active-site residue. Arginine 176 provides a ligand contact to NAD(+). 202–203 serves as a coordination point for D-glyceraldehyde 3-phosphate; the sequence is HG. Glutamine 309 contacts NAD(+). A disordered region spans residues 327–350; sequence LEEDPEASMDATDSALGVLNSPPL.

This sequence belongs to the glyceraldehyde-3-phosphate dehydrogenase family. Homotetramer.

Its subcellular location is the cytoplasm. It catalyses the reaction D-glyceraldehyde 3-phosphate + phosphate + NADP(+) = (2R)-3-phospho-glyceroyl phosphate + NADPH + H(+). The catalysed reaction is D-glyceraldehyde 3-phosphate + phosphate + NAD(+) = (2R)-3-phospho-glyceroyl phosphate + NADH + H(+). The protein operates within carbohydrate degradation; glycolysis; pyruvate from D-glyceraldehyde 3-phosphate: step 1/5. The polypeptide is Glyceraldehyde-3-phosphate dehydrogenase (Methanopyrus kandleri (strain AV19 / DSM 6324 / JCM 9639 / NBRC 100938)).